The chain runs to 20 residues: Transcriptional regulatory protein PufK (20 aa).

A compositionally biased stretch (basic residues) spans 1-11; that stretch reads MVPYRNPRHQH. A disordered region spans residues 1–20; that stretch reads MVPYRNPRHQHVASVLRSGG.

Its function is as follows. Involved in the transcriptional regulation of pufB. This Cereibacter sphaeroides (strain ATCC 17023 / DSM 158 / JCM 6121 / CCUG 31486 / LMG 2827 / NBRC 12203 / NCIMB 8253 / ATH 2.4.1.) (Rhodobacter sphaeroides) protein is Transcriptional regulatory protein PufK (pufK).